The chain runs to 1073 residues: Probable nuclear hormone receptor HR38 (1073 aa).

Disordered regions lie at residues 55–87 (NLNAPTHQQSHTSHLQHAQQHQTHQQHPLLPPP), 150–185 (TPAPPATEPRKIKPLGAGKLKVGKTDSNSDSNSNCD), 263–326 (TQTA…LVSP), 437–458 (ALHAQQQQQQQQQQQQQQQQHQ), 492–514 (KYNSSSGSSPQQASSSSTAAPTP), 529–579 (PPLS…NSGG), and 618–640 (GQQQQQQQQSYQQHNYNSHNGER). Low complexity-rich tracts occupy residues 59-82 (PTHQQSHTSHLQHAQQHQTHQQHP), 175-185 (DSNSDSNSNCD), and 263-277 (TQTASTTTTTSASAA). Over residues 279–291 (HHQHHNHLLHQQH) the composition is skewed to basic residues. Low complexity-rich tracts occupy residues 292–326 (HNQQQQQQQQQQQQQQQQQQQEHLQQQHQQQLVSP), 441–458 (QQQQQQQQQQQQQQQQHQ), and 495–514 (SSSGSSPQQASSSSTAAPTP). A compositionally biased stretch (low complexity) spans 619–636 (QQQQQQQQSYQQHNYNSH). The segment at residues 741–816 (SQLCAVCGDT…VGMVKEVVRT (76 aa)) is a DNA-binding region (nuclear receptor). NR C4-type zinc fingers lie at residues 744 to 764 (CAVCGDTAACQHYGVRTCEGC) and 780 to 804 (CLADKNCPVDKRRRNRCQFCRFQKC). Residues 819–841 (LKGRRGRLPSKPKSPQESPPSPP) form a disordered region. Residues 840–1070 (PPISLITALV…ALIENMFVTT (231 aa)) form the NR LBD domain.

It belongs to the nuclear hormone receptor family. NR4 subfamily. In terms of assembly, forms a heterodimer with USP. As to expression, ubiquitously expressed in preblastoderm embryos, specifically in central nervous system and intestinal tract. Highly expressed in third instar larval imaginal disks and brain complexes, but not in ovaries.

It is found in the nucleus. Binds to NGFI-B response elements. Plays an important role in late stages of epidermal metamorphosis. The protein is Probable nuclear hormone receptor HR38 (Hr38) of Drosophila melanogaster (Fruit fly).